Consider the following 356-residue polypeptide: Golgi-resident adenosine 3',5'-bisphosphate 3'-phosphatase (356 aa).

Residue methionine 1 is modified to N-acetylmethionine. Residues 1-12 are Cytoplasmic-facing; that stretch reads MAPMGIRLSPLG. A helical transmembrane segment spans residues 13-33; sequence VAVFFLLGLGVLYHLYSGFLA. Residues 34 to 356 lie on the Lumenal side of the membrane; sequence GRFSLFGLGS…KLPDLEKSGH (323 aa). A disordered region spans residues 84–104; the sequence is ESNVLHEKSKGKTREGADDKM. Aspartate 108 functions as the Proton acceptor in the catalytic mechanism. 4 residues coordinate Mg(2+): glutamate 131, aspartate 172, leucine 174, and aspartate 175. The Proton acceptor role is filled by threonine 177. The AMP site is built by serine 240 and histidine 243. Asparagine 257 carries N-linked (GlcNAc...) asparagine glycosylation. Glycine 266 and lysine 270 together coordinate AMP. Position 298 (aspartate 298) interacts with Mg(2+).

This sequence belongs to the inositol monophosphatase superfamily. It depends on Mg(2+) as a cofactor. Post-translationally, N-glycosylated. Contains N-linked glycan resistant to endoglycosydase H.

The protein localises to the golgi apparatus. It localises to the trans-Golgi network membrane. The catalysed reaction is adenosine 3',5'-bisphosphate + H2O = AMP + phosphate. The protein operates within sulfur metabolism. Its activity is regulated as follows. Strongly inhibited by lithium. Its function is as follows. Exhibits 3'-nucleotidase activity toward adenosine 3',5'-bisphosphate (PAP), namely hydrolyzes adenosine 3',5'-bisphosphate into adenosine 5'-monophosphate (AMP) and a phosphate. May play a role in the formation of skeletal elements derived through endochondral ossification, possibly by clearing adenosine 3',5'-bisphosphate produced by Golgi sulfotransferases during glycosaminoglycan sulfation. Has no activity toward 3'-phosphoadenosine 5'-phosphosulfate (PAPS) or inositol phosphate (IP) substrates including I(1)P, I(1,4)P2, I(1,3,4)P3, I(1,4,5)P3 and I(1,3,4,5)P4. The sequence is that of Golgi-resident adenosine 3',5'-bisphosphate 3'-phosphatase from Mus musculus (Mouse).